We begin with the raw amino-acid sequence, 278 residues long: Probable endonuclease 4 (278 aa).

Zn(2+) is bound by residues histidine 66, histidine 106, glutamate 142, aspartate 176, histidine 179, histidine 213, aspartate 226, histidine 228, and glutamate 258.

This sequence belongs to the AP endonuclease 2 family. It depends on Zn(2+) as a cofactor.

It catalyses the reaction Endonucleolytic cleavage to 5'-phosphooligonucleotide end-products.. Functionally, endonuclease IV plays a role in DNA repair. It cleaves phosphodiester bonds at apurinic or apyrimidinic (AP) sites, generating a 3'-hydroxyl group and a 5'-terminal sugar phosphate. The protein is Probable endonuclease 4 of Halothermothrix orenii (strain H 168 / OCM 544 / DSM 9562).